Here is a 61-residue protein sequence, read N- to C-terminus: UPF0370 protein Spro_3503 (61 aa).

The chain crosses the membrane as a helical span at residues 3-23; sequence WLADYWWIILLILVGMIISGI. The segment covering 38 to 48 has biased composition (basic and acidic residues); that stretch reads KPELPPHRDNN. The interval 38-61 is disordered; sequence KPELPPHRDNNAEWDDDDDWPKKK. Residues 49 to 61 are compositionally biased toward acidic residues; that stretch reads AEWDDDDDWPKKK.

The protein belongs to the UPF0370 family.

The protein resides in the cell membrane. This chain is UPF0370 protein Spro_3503, found in Serratia proteamaculans (strain 568).